The following is a 245-amino-acid chain: 14-3-3 protein zeta/delta (245 aa).

Residue Met1 is modified to N-acetylmethionine. Lys3 is modified (N6-acetyllysine). Phosphoserine; by PKA is present on Ser58. Lys68 is subject to N6-acetyllysine. Phosphoserine occurs at positions 184, 207, and 210. Position 232 is a phosphothreonine; by CK1 (Thr232).

The protein belongs to the 14-3-3 family. As to quaternary structure, homodimer. Heterodimerizes with YWHAE. Homo- and heterodimerization is inhibited by phosphorylation on Ser-58. Interacts with FOXO4, NOXA1, SSH1 ARHGEF2, CDK16 and BSPRY. Interacts with WEE1 (C-terminal). Interacts with MLF1 (phosphorylated form); the interaction retains it in the cytoplasm. Interacts with BAX; the interaction occurs in the cytoplasm. Under stress conditions, MAPK8-mediated phosphorylation releases BAX to mitochondria. Interacts with TP53; the interaction enhances p53 transcriptional activity. The Ser-58 phosphorylated form inhibits this interaction and p53 transcriptional activity. Interacts with ABL1 (phosphorylated form); the interaction retains ABL1 in the cytoplasm. Interacts with PKA-phosphorylated AANAT; the interaction modulates AANAT enzymatic activity by increasing affinity for arylalkylamines and acetyl-CoA and protecting the enzyme from dephosphorylation and proteasomal degradation. It may also prevent thiol-dependent inactivation. Interacts with AKT1; the interaction phosphorylates YWHAZ and modulates dimerization. Interacts with GAB2. Interacts with BCL2L11, SAMSN1 and TLK2. Interacts with phosphorylated RAF1; the interaction is inhibited when YWHAZ is phosphorylated on Thr-232. Interacts with Thr-phosphorylated ITGB2. Interacts with the 'Thr-369' phosphorylated form of DAPK2. Interacts with PI4KB, TBC1D22A and TBC1D22B. Interacts with ZFP36L1 (via phosphorylated form); this interaction occurs in a p38 MAPK- and AKT-signaling pathways. Interacts with SLITRK1. Interacts with AK5, LDB1, MADD, MARK3, PDE1A and SMARCB1. Interacts with YWHAZ. Interacts with MEFV. Interacts with ADAM22 (via C-terminus). The delta, brain-specific form differs from the zeta form in being phosphorylated. Phosphorylation on Ser-184 by MAPK8; promotes dissociation of BAX and translocation of BAX to mitochondria. Phosphorylation on Thr-232; inhibits binding of RAF1. Phosphorylated on Ser-58 by PKA and protein kinase C delta type catalytic subunit in a sphingosine-dependent fashion. Phosphorylation on Ser-58 by PKA; disrupts homodimerization and heterodimerization with YHAE and TP53.

The protein resides in the cytoplasm. Its subcellular location is the melanosome. Functionally, adapter protein implicated in the regulation of a large spectrum of both general and specialized signaling pathways. Binds to a large number of partners, usually by recognition of a phosphoserine or phosphothreonine motif. Binding generally results in the modulation of the activity of the binding partner. Promotes cytosolic retention and inactivation of TFEB transcription factor by binding to phosphorylated TFEB. Induces ARHGEF7 activity on RAC1 as well as lamellipodia and membrane ruffle formation. In neurons, regulates spine maturation through the modulation of ARHGEF7 activity. The sequence is that of 14-3-3 protein zeta/delta (YWHAZ) from Bos taurus (Bovine).